Consider the following 174-residue polypeptide: dCTP deaminase, dUMP-forming (174 aa).

DCTP is bound by residues 93-98, Asp-111, 119-121, Gln-138, and Tyr-151; these read RSSIGR and TLE. Glu-121 functions as the Proton donor/acceptor in the catalytic mechanism.

This sequence belongs to the dCTP deaminase family. Homotrimer.

It carries out the reaction dCTP + 2 H2O = dUMP + NH4(+) + diphosphate. It functions in the pathway pyrimidine metabolism; dUMP biosynthesis; dUMP from dCTP: step 1/1. Its function is as follows. Bifunctional enzyme that catalyzes both the deamination of dCTP to dUTP and the hydrolysis of dUTP to dUMP without releasing the toxic dUTP intermediate. This is dCTP deaminase, dUMP-forming from Leptospira biflexa serovar Patoc (strain Patoc 1 / Ames).